We begin with the raw amino-acid sequence, 1122 residues long: Histidine kinase CKI1 (1122 aa).

At 1–12 (MMVKVTKLVASR) the chain is on the cytoplasmic side. A helical membrane pass occupies residues 13–33 (PIVVFCVLAFLVVVFECIWIS). At 34 to 345 (NWRTTTENLV…KHQAEKAKYQ (312 aa)) the chain is on the extracellular side. Residues 346–366 (LIVVMIFLGFGWPVWFVWFMM) form a helical membrane-spanning segment. Residues 367–1122 (QATRREMHMR…VIREIESKRH (756 aa)) are Cytoplasmic-facing. A Histidine kinase domain is found at 402–671 (NASHDIRGAL…CFQFNVLLTT (270 aa)). Phosphohistidine; by autocatalysis is present on His405. The span at 918 to 928 (AERSPKHKVQE) shows a compositional bias: basic and acidic residues. The disordered stretch occupies residues 918–981 (AERSPKHKVQ…QETSKPSDDE (64 aa)). The Response regulatory domain occupies 987-1120 (RVLVVDDNFI…ANVIREIESK (134 aa)). Residue Asp1050 is modified to 4-aspartylphosphate.

As to quaternary structure, homodimer. Interacts with AHP2 and AHP3. Expressed in vascular tissues of inflorescence stems and floral organs, especially in procambium cells, and in siliques.

Its subcellular location is the cell membrane. It carries out the reaction ATP + protein L-histidine = ADP + protein N-phospho-L-histidine.. Essential protein. Functions as a histidine kinase and transmits the stress signal to a downstream MAPK cascade. This protein undergoes an ATP-dependent autophosphorylation at a conserved histidine residue in the kinase core, and a phosphoryl group is then transferred to a conserved aspartate residue in the receiver domain. Required for the development of megagametophyte in female gametophyte (embryo sac) independently of cytokinin. Contributes to vascular bundle formation and secondary growth in a cytokinin-independent manner, probably by promoting the maintenance of mitotic activity and/or identity of procambial cells. Seems to influence and promote the cytokinin signaling pathway. In Arabidopsis thaliana (Mouse-ear cress), this protein is Histidine kinase CKI1 (CKI1).